The primary structure comprises 434 residues: MLLDLNVESPERSGTSSSSVLNSGDAGGGGGGGGGGGLFRFDLLASSPDDDECSGEQHQLPAASGIVTRQLLPPPPPAAPSPAPAWQPPRRAAEDAALAQRPVVAKKTRRGPRSRSSQYRGVTFYRRTGRWESHIWDCGKQVYLGGFDTAHAAARAYDRAAIKFRGLEADINFNLSDYEDDLKQMRNWTKEEFVHILRRQSTGFARGSSKFRGVTLHKCGRWEARMGQLLGKKYIYLGLFDTEVEAARAYDRAAIRFNGREAVTNFEPASYNVDALPDAGNEAIVDGDLDLDLRISQPNARDSKSDVATTGLQLTCDSPESSNITVHQPMGSSPQWTVHHQSTPLPPQHQRLYPSHCLGFLPNLQERPMDRRLELGPMPFPTQAWQMQAPSHLPLLHAAASSGFSAGAGAGVAAATRRQPPFPADHPFYFPPTA.

The segment at 1–116 (MLLDLNVESP…KTRRGPRSRS (116 aa)) is disordered. The span at 12-23 (RSGTSSSSVLNS) shows a compositional bias: low complexity. Residues 25 to 38 (DAGGGGGGGGGGGL) show a composition bias toward gly residues. A compositionally biased stretch (pro residues) spans 72–87 (LPPPPPAAPSPAPAWQ). Over residues 104–113 (VAKKTRRGPR) the composition is skewed to basic residues. Positions 106–115 (KKTRRGPRSR) match the Nuclear localization signal motif. 2 DNA-binding regions (AP2/ERF) span residues 118–174 (QYRG…INFN) and 210–267 (KFRG…TNFE). The short motif at 291-295 (LDLRI) is the EAR element.

This sequence belongs to the AP2/ERF transcription factor family. AP2 subfamily. May form homodimer. Interacts with TPR2/ASP1.

The protein localises to the nucleus. Its function is as follows. Probable transcription factor. Involved in spikelet transition. Together with SNB, controls synergistically inflorescence architecture and floral meristem establishment via the regulation of spatio-temporal expression of B- and E-function floral organ identity genes in the lodicules and of spikelet meristem genes. Prevents lemma and palea elongation as well as grain growth. This chain is APETALA2-like protein 2, found in Oryza sativa subsp. indica (Rice).